The sequence spans 380 residues: Tryptophan 2,3-dioxygenase (380 aa).

Substrate contacts are provided by residues 57–61 and Arg128; that span reads FIITH. His313 contacts heme. Thr328 provides a ligand contact to substrate.

The protein belongs to the tryptophan 2,3-dioxygenase family. Homotetramer. Dimer of dimers. Heme serves as cofactor.

The enzyme catalyses L-tryptophan + O2 = N-formyl-L-kynurenine. The protein operates within amino-acid degradation; L-tryptophan degradation via kynurenine pathway; L-kynurenine from L-tryptophan: step 1/2. Its pathway is pigment biosynthesis; ommochrome biosynthesis. Functionally, heme-dependent dioxygenase that catalyzes the oxidative cleavage of the L-tryptophan (L-Trp) pyrrole ring and converts L-tryptophan to N-formyl-L-kynurenine. Catalyzes the oxidative cleavage of the indole moiety. This chain is Tryptophan 2,3-dioxygenase, found in Drosophila ananassae (Fruit fly).